We begin with the raw amino-acid sequence, 148 residues long: Large ribosomal subunit protein bL9 (148 aa).

It belongs to the bacterial ribosomal protein bL9 family.

In terms of biological role, binds to the 23S rRNA. This chain is Large ribosomal subunit protein bL9, found in Salinispora tropica (strain ATCC BAA-916 / DSM 44818 / JCM 13857 / NBRC 105044 / CNB-440).